Here is a 241-residue protein sequence, read N- to C-terminus: Uridylate kinase (241 aa).

15–18 (KISG) is a binding site for ATP. Positions 23 to 28 (GDQGFG) are involved in allosteric activation by GTP. UMP is bound at residue Gly-57. The ATP site is built by Gly-58 and Arg-62. UMP is bound by residues Asp-77 and 138–145 (TGNPYFTT). ATP-binding residues include Thr-165, Tyr-171, and Asp-174.

This sequence belongs to the UMP kinase family. Homohexamer.

Its subcellular location is the cytoplasm. It catalyses the reaction UMP + ATP = UDP + ADP. It participates in pyrimidine metabolism; CTP biosynthesis via de novo pathway; UDP from UMP (UMPK route): step 1/1. Its activity is regulated as follows. Allosterically activated by GTP. Inhibited by UTP. Catalyzes the reversible phosphorylation of UMP to UDP. In Paracoccus zeaxanthinifaciens, this protein is Uridylate kinase.